The following is a 102-amino-acid chain: MIPGEVITPEGDIELNVDRPTLKVSVANTGDRPIQVGSHFHFAEANDALQFDRGLTKGYRLNIAAGTAVRFEPGQSRDVELVALSGKRQVYGFAGRVMGALD.

This sequence belongs to the urease beta subunit family. Heterotrimer of UreA (gamma), UreB (beta) and UreC (alpha) subunits. Three heterotrimers associate to form the active enzyme.

The protein resides in the cytoplasm. The catalysed reaction is urea + 2 H2O + H(+) = hydrogencarbonate + 2 NH4(+). It participates in nitrogen metabolism; urea degradation; CO(2) and NH(3) from urea (urease route): step 1/1. The protein is Urease subunit beta of Acinetobacter baylyi (strain ATCC 33305 / BD413 / ADP1).